A 1838-amino-acid chain; its full sequence is Collagen alpha-1(V) chain (1838 aa).

Positions 1-36 (MDVHTRWKAARPGALLLSSPLLLFLLLLWAPPSSRA) are cleaved as a signal peptide. The Laminin G-like domain maps to 72 to 244 (DVAYRVSKDA…DYCEHYSPDC (173 aa)). Residues 231–443 (RAAYDYCEHY…MPANQDTIFE (213 aa)) form a nonhelical region region. Sulfotyrosine is present on residues Tyr234, Tyr236, Tyr240, Tyr262, and Tyr263. 2 disordered regions span residues 242–545 (PDCD…QESQ) and 559–1574 (GPAG…EVIQ). The span at 258 to 268 (NPDEYYPEGEG) shows a compositional bias: acidic residues. 4 stretches are compositionally biased toward low complexity: residues 335-345 (DYDYVPPDDYY), 374-387 (VPTSTTVTSNTSNP), 413-428 (YDPYFDPDSDSSVSPS), and 460-469 (IIEPGMLIEG). The tract at residues 444-558 (GIGGPRGEKG…ILQQARLALR (115 aa)) is interrupted collagenous region. A compositionally biased stretch (pro residues) spans 470–485 (PPGPEGPAGLPGPPGT). Composition is skewed to low complexity over residues 506-523 (LPGADGLPGPPGTMLMLP) and 559-570 (GPAGPMGLTGRP). Residues 559–1570 (GPAGPMGLTG…GLPGPPGPPG (1012 aa)) form a triple-helical region region. 3 positions are modified to 4-hydroxyproline: Pro570, Pro576, and Pro621. Residue Lys627 is modified to 5-hydroxylysine. A 4-hydroxyproline modification is found at Pro639. Lys642 carries the post-translational modification 5-hydroxylysine. Residues Pro648, Pro654, Pro657, Pro675, and Pro678 each carry the 4-hydroxyproline modification. Positions 671–686 (PRGLPGEPGPRGLLGP) are enriched in low complexity. 3-hydroxyproline occurs at positions 680 and 686. Over residues 687 to 696 (KGPPGPPGPP) the composition is skewed to pro residues. A 4-hydroxyproline mark is found at Pro690, Pro696, and Pro705. At Lys708 the chain carries 5-hydroxylysine. Residues Pro717, Pro720, Pro726, and Pro732 each carry the 4-hydroxyproline modification. Low complexity predominate over residues 722–741 (QQGNPGAQGLPGPQGAIGPP). Lys744 is subject to 5-hydroxylysine. Low complexity predominate over residues 747-756 (LGKPGLPGMP). 5 positions are modified to 4-hydroxyproline: Pro750, Pro756, Pro762, Pro765, and Pro771. 5-hydroxylysine is present on Lys774. Residues Pro780 and Pro789 each carry the 4-hydroxyproline modification. A 5-hydroxylysine mark is found at Lys795, Lys804, Lys807, and Lys810. Residue Pro816 is modified to 4-hydroxyproline. 5-hydroxylysine is present on Lys819. Residue Pro834 is modified to 4-hydroxyproline. Residues 837–846 (RGEDGPEGPK) are compositionally biased toward basic and acidic residues. Lys846 and Lys864 each carry 5-hydroxylysine. 3 positions are modified to 4-hydroxyproline: Pro870, Pro873, and Pro876. Residue Lys882 is modified to 5-hydroxylysine. 2 positions are modified to 4-hydroxyproline: Pro888 and Pro891. Lys897 is subject to 5-hydroxylysine. Residues Pro903 and Pro906 each carry the 4-hydroxyproline modification. Residues 908–917 (PRGQRGPTGP) are compositionally biased toward low complexity. 4-hydroxyproline is present on residues Pro930 and Pro945. Low complexity-rich tracts occupy residues 971–990 (KDGLPGHPGQRGETGFQGKT) and 999–1011 (VGPQGPTGETGPM). A 4-hydroxyproline mark is found at Pro1017, Pro1020, Pro1023, and Pro1029. A compositionally biased stretch (low complexity) spans 1088 to 1104 (SPGERGPAGAAGPIGIP). Pro residues predominate over residues 1106–1115 (RPGPQGPPGP). Residues Pro1221 and Pro1224 each carry the 4-hydroxyproline modification. The span at 1259–1268 (PSGAPGADGP) shows a compositional bias: low complexity. The span at 1294 to 1303 (GLPGEGGPLG) shows a compositional bias: gly residues. Composition is skewed to pro residues over residues 1380 to 1398 (TGEPGPSGPPGKRGPPGPA) and 1454 to 1469 (SPGPDGPPGPMGPPGL). Residues Pro1467 and Pro1470 each carry the 4-hydroxyproline modification. A compositionally biased stretch (low complexity) spans 1485-1494 (PGLIGLIGPP). The span at 1526 to 1541 (PLGPPGPPGLPGPPGP) shows a compositional bias: pro residues. The segment covering 1542-1554 (KGAKGSSGPTGPK) has biased composition (low complexity). The segment at 1571–1605 (EVIQPLPIQASRTRRNIDASQLLDDGAGESYVDYA) is nonhelical region. Residues Tyr1601 and Tyr1604 each carry the sulfotyrosine modification. The Fibrillar collagen NC1 domain maps to 1609-1837 (EEIFGSLNSL…GFEVGPACFL (229 aa)).

It belongs to the fibrillar collagen family. In terms of assembly, trimers of two alpha 1(V) and one alpha 2(V) chains in most tissues and trimers of one alpha 1(V), one alpha 2(V), and one alpha 3(V) chains in placenta. Interacts with CSPG4. Post-translationally, hydroxylation on proline residues within the sequence motif, GXPG, is most likely to be 4-hydroxy as this fits the requirement for 4-hydroxylation in vertebrates. In terms of processing, sulfated on 40% of tyrosines. Widely expressed. Isoform 2 is more highly expressed in liver, kidney and lung.

Its subcellular location is the secreted. It is found in the extracellular space. It localises to the extracellular matrix. In terms of biological role, type V collagen is a member of group I collagen (fibrillar forming collagen). It is a minor connective tissue component of nearly ubiquitous distribution. Type V collagen binds to DNA, heparan sulfate, thrombospondin, heparin, and insulin. Transcriptionally activated by CEBPZ, which recognizes a CCAAT-like motif, CAAAT in the COL5A1 promoter. This Mus musculus (Mouse) protein is Collagen alpha-1(V) chain (Col5a1).